Consider the following 451-residue polypeptide: LisH domain-containing protein C1711.05 (451 aa).

A LisH domain is found at 6 to 38 (MKSKVCPLIYHFLQENGYVKTAQTFLKETGDKD). Positions 59–394 (PYLTTEDVGK…VGDPSQWDFA (336 aa)) are disordered. Basic and acidic residues predominate over residues 73–98 (KESLEKSNDDSQKISKKGAPPEKAHS). Positions 99 to 120 (SSEASGSGSSSDESDSSSSESE) are enriched in low complexity. Positions 135–145 (SESESSSEDSD) are enriched in acidic residues. Over residues 146–174 (SSSSSSDSESESSSEGSDSSSSSSSSESE) the composition is skewed to low complexity. A compositionally biased stretch (acidic residues) spans 189 to 199 (SESESSSEDSD). Over residues 200 to 228 (SSSSSSDSESESSSEGSDSSSSSSSSESE) the composition is skewed to low complexity. Composition is skewed to acidic residues over residues 243 to 253 (SESESSSEDSD) and 278 to 300 (DSEDDSSSDSSDSESESSSEDSD). The segment covering 301 to 319 (STSSSSDSDSSSSSEDGNS) has biased composition (low complexity). Polar residues predominate over residues 320 to 332 (NTDTTTSGEVSAQ). Residues 333-343 (SSTNSTSSEES) are compositionally biased toward low complexity. Over residues 344-365 (TSVKDEDSSKIHDKSLKRKHED) the composition is skewed to basic and acidic residues. Residues 369–380 (STSTKSSRTTKT) are compositionally biased toward low complexity.

It localises to the nucleus. The protein localises to the nucleolus. The protein is LisH domain-containing protein C1711.05 of Schizosaccharomyces pombe (strain 972 / ATCC 24843) (Fission yeast).